The chain runs to 381 residues: ELMO domain-containing protein 3 (381 aa).

An ELMO domain is found at 170–324 (THGRVLQTIY…DLEALAKKSP (155 aa)).

Both isoform 1 and isoform 2 are widely expressed.

The protein localises to the cell projection. Its subcellular location is the stereocilium. It localises to the kinocilium. The protein resides in the cytoplasm. It is found in the cytoskeleton. Functionally, acts as a GTPase-activating protein (GAP) for ARL2 with low specific activity. This is ELMO domain-containing protein 3 (Elmod3) from Mus musculus (Mouse).